Here is a 245-residue protein sequence, read N- to C-terminus: Adenosylcobinamide-GDP ribazoletransferase (245 aa).

5 helical membrane passes run phenylalanine 31–alanine 51, proline 61–leucine 81, valine 113–leucine 133, alanine 138–threonine 158, and leucine 192–leucine 212.

The protein belongs to the CobS family. Requires Mg(2+) as cofactor.

It is found in the cell inner membrane. The enzyme catalyses alpha-ribazole + adenosylcob(III)inamide-GDP = adenosylcob(III)alamin + GMP + H(+). It catalyses the reaction alpha-ribazole 5'-phosphate + adenosylcob(III)inamide-GDP = adenosylcob(III)alamin 5'-phosphate + GMP + H(+). It functions in the pathway cofactor biosynthesis; adenosylcobalamin biosynthesis; adenosylcobalamin from cob(II)yrinate a,c-diamide: step 7/7. Joins adenosylcobinamide-GDP and alpha-ribazole to generate adenosylcobalamin (Ado-cobalamin). Also synthesizes adenosylcobalamin 5'-phosphate from adenosylcobinamide-GDP and alpha-ribazole 5'-phosphate. The protein is Adenosylcobinamide-GDP ribazoletransferase of Pseudomonas aeruginosa (strain UCBPP-PA14).